The chain runs to 150 residues: UPF0756 membrane protein YPN_1328 (150 aa).

Transmembrane regions (helical) follow at residues alanine 16–isoleucine 36, tyrosine 51–glycine 71, isoleucine 88–methionine 108, and valine 114–valine 134.

The protein belongs to the UPF0756 family.

Its subcellular location is the cell membrane. The chain is UPF0756 membrane protein YPN_1328 from Yersinia pestis bv. Antiqua (strain Nepal516).